Consider the following 251-residue polypeptide: MGQKVSPMGLRVGINREWDAAWYAEKTQVANLLLEDLKIRKYINEVYAKAAISRVIIERVKGPNNKDRVKITLHTAKPGVVIGHEAETKNKVVKELGFITKKNIILNVVEVRRPELDATLVAKSIAEQLEARASFRRVQKVAIQRALKAGAKGAKTLISGRLGGAEIARSEGYNEGQVPLQTLRADVDYAVAEAHTTYGKLGIKVWIYKGEVFDVQPRAFQEEKKPAKKFNKKPVAAKPANKEEKSSKEVK.

The KH type-2 domain occupies 39–112 (IRKYINEVYA…NIILNVVEVR (74 aa)). The tract at residues 222–251 (EEKKPAKKFNKKPVAAKPANKEEKSSKEVK) is disordered. Basic and acidic residues predominate over residues 240-251 (ANKEEKSSKEVK).

The protein belongs to the universal ribosomal protein uS3 family. In terms of assembly, part of the 30S ribosomal subunit. Forms a tight complex with proteins S10 and S14.

Its function is as follows. Binds the lower part of the 30S subunit head. Binds mRNA in the 70S ribosome, positioning it for translation. This chain is Small ribosomal subunit protein uS3, found in Anaeroplasma abactoclasticum.